A 135-amino-acid polypeptide reads, in one-letter code: Cystatin-1 (135 aa).

The N-terminal stretch at 1-24 (MRKHRIVSLVAALLVLLALAAVSS) is a signal peptide. The Secondary area of contact signature appears at 86–90 (QVVAG).

The protein belongs to the cystatin family. Phytocystatin subfamily.

The chain is Cystatin-1 (RAMDAZC7) from Zea mays (Maize).